Here is a 195-residue protein sequence, read N- to C-terminus: Dephospho-CoA kinase (195 aa).

A DPCK domain is found at 2–195 (IISLTGGIGV…DIVDSLNLNT (194 aa)). ATP is bound at residue 10–15 (GVGKSF).

Belongs to the CoaE family.

It is found in the cytoplasm. The catalysed reaction is 3'-dephospho-CoA + ATP = ADP + CoA + H(+). It functions in the pathway cofactor biosynthesis; coenzyme A biosynthesis; CoA from (R)-pantothenate: step 5/5. Its function is as follows. Catalyzes the phosphorylation of the 3'-hydroxyl group of dephosphocoenzyme A to form coenzyme A. In Wolbachia pipientis wMel, this protein is Dephospho-CoA kinase.